We begin with the raw amino-acid sequence, 275 residues long: 3-methyl-2-oxobutanoate hydroxymethyltransferase (275 aa).

The Mg(2+) site is built by D44 and D83. 3-methyl-2-oxobutanoate is bound by residues D44–S45, D83, and K113. Residue E115 coordinates Mg(2+). Residue E182 is the Proton acceptor of the active site.

Belongs to the PanB family. Homodecamer; pentamer of dimers. It depends on Mg(2+) as a cofactor.

It localises to the cytoplasm. The enzyme catalyses 3-methyl-2-oxobutanoate + (6R)-5,10-methylene-5,6,7,8-tetrahydrofolate + H2O = 2-dehydropantoate + (6S)-5,6,7,8-tetrahydrofolate. The protein operates within cofactor biosynthesis; (R)-pantothenate biosynthesis; (R)-pantoate from 3-methyl-2-oxobutanoate: step 1/2. In terms of biological role, catalyzes the reversible reaction in which hydroxymethyl group from 5,10-methylenetetrahydrofolate is transferred onto alpha-ketoisovalerate to form ketopantoate. The polypeptide is 3-methyl-2-oxobutanoate hydroxymethyltransferase (Clostridium novyi (strain NT)).